The primary structure comprises 486 residues: Aspartyl/glutamyl-tRNA(Asn/Gln) amidotransferase subunit B (486 aa).

Belongs to the GatB/GatE family. GatB subfamily. In terms of assembly, heterotrimer of A, B and C subunits.

It carries out the reaction L-glutamyl-tRNA(Gln) + L-glutamine + ATP + H2O = L-glutaminyl-tRNA(Gln) + L-glutamate + ADP + phosphate + H(+). The enzyme catalyses L-aspartyl-tRNA(Asn) + L-glutamine + ATP + H2O = L-asparaginyl-tRNA(Asn) + L-glutamate + ADP + phosphate + 2 H(+). Its function is as follows. Allows the formation of correctly charged Asn-tRNA(Asn) or Gln-tRNA(Gln) through the transamidation of misacylated Asp-tRNA(Asn) or Glu-tRNA(Gln) in organisms which lack either or both of asparaginyl-tRNA or glutaminyl-tRNA synthetases. The reaction takes place in the presence of glutamine and ATP through an activated phospho-Asp-tRNA(Asn) or phospho-Glu-tRNA(Gln). In Leptospira interrogans serogroup Icterohaemorrhagiae serovar Lai (strain 56601), this protein is Aspartyl/glutamyl-tRNA(Asn/Gln) amidotransferase subunit B.